We begin with the raw amino-acid sequence, 39 residues long: Omega-theraphotoxin-Ba1a (39 aa).

Intrachain disulfides connect Cys4–Cys25, Cys8–Cys31, and Cys17–Cys36.

The protein belongs to the neurotoxin 12 (Hwtx-2) family. 06 (TXP1) subfamily. As to expression, expressed by the venom gland.

It is found in the secreted. Its function is as follows. Inhibits voltage-gated calcium channels (Cav) in rat cerebellar granule cells. Has insecticidal activity to crickets (Acheta domesticus). Is not toxic to mice. The chain is Omega-theraphotoxin-Ba1a from Brachypelma albiceps (Mexican golden redrump tarantula).